A 172-amino-acid chain; its full sequence is Large ribosomal subunit protein uL10 (172 aa).

It belongs to the universal ribosomal protein uL10 family. In terms of assembly, part of the ribosomal stalk of the 50S ribosomal subunit. The N-terminus interacts with L11 and the large rRNA to form the base of the stalk. The C-terminus forms an elongated spine to which L12 dimers bind in a sequential fashion forming a multimeric L10(L12)X complex.

Functionally, forms part of the ribosomal stalk, playing a central role in the interaction of the ribosome with GTP-bound translation factors. In Methylobacterium radiotolerans (strain ATCC 27329 / DSM 1819 / JCM 2831 / NBRC 15690 / NCIMB 10815 / 0-1), this protein is Large ribosomal subunit protein uL10.